The chain runs to 405 residues: Dihydrolipoyllysine-residue succinyltransferase component of 2-oxoglutarate dehydrogenase complex (405 aa).

The 76-residue stretch at 3 to 78 (SVDILVPDLP…TSRQILGRLR (76 aa)) folds into the Lipoyl-binding domain. Lys44 bears the N6-lipoyllysine mark. The interval 75–111 (GRLREGNSAGKETSAKSEEKASTPAQRQQASLEEQNN) is disordered. Over residues 97 to 111 (TPAQRQQASLEEQNN) the composition is skewed to polar residues. The 38-residue stretch at 113-150 (ALSPAIRRLLAEHNLDASAIKGTGVGGRLTREDVEKHL) folds into the Peripheral subunit-binding (PSBD) domain. Lys148 carries the post-translational modification N6-acetyllysine. Positions 153–173 (APAKESAPAAAAPAAQPALAA) are enriched in low complexity. A disordered region spans residues 153–178 (APAKESAPAAAAPAAQPALAARSEKR). Residues His376 and Asp380 contribute to the active site.

It belongs to the 2-oxoacid dehydrogenase family. Forms a 24-polypeptide structural core with octahedral symmetry. Part of the 2-oxoglutarate dehydrogenase (OGDH) complex composed of E1 (2-oxoglutarate dehydrogenase), E2 (dihydrolipoamide succinyltransferase) and E3 (dihydrolipoamide dehydrogenase); the complex contains multiple copies of the three enzymatic components (E1, E2 and E3). Interacts with SucA (via N-terminus), the E1 component of OGDH complex. The cofactor is (R)-lipoate.

The enzyme catalyses N(6)-[(R)-dihydrolipoyl]-L-lysyl-[protein] + succinyl-CoA = N(6)-[(R)-S(8)-succinyldihydrolipoyl]-L-lysyl-[protein] + CoA. The protein operates within amino-acid degradation; L-lysine degradation via saccharopine pathway; glutaryl-CoA from L-lysine: step 6/6. Its function is as follows. E2 component of the 2-oxoglutarate dehydrogenase (OGDH) complex which catalyzes the second step in the conversion of 2-oxoglutarate to succinyl-CoA and CO(2). The protein is Dihydrolipoyllysine-residue succinyltransferase component of 2-oxoglutarate dehydrogenase complex (sucB) of Escherichia coli O157:H7.